The chain runs to 201 residues: Ependymin-related protein 2 (201 aa).

The N-terminal stretch at 1 to 21 (MILQVVLLLACLSGAIVSTGA) is a signal peptide. Asn-38 and Asn-137 each carry an N-linked (GlcNAc...) asparagine glycan. Residues 199–201 (CRA) carry the Microbody targeting signal motif.

The protein belongs to the ependymin family. In terms of tissue distribution, component of the acid-soluble and acid-insoluble organic matrix of calcified shell layers (at protein level).

The protein resides in the secreted. This chain is Ependymin-related protein 2, found in Haliotis asinina (Donkey's ear abalone).